Consider the following 340-residue polypeptide: Ferrochelatase (340 aa).

Residues histidine 189 and glutamate 292 each coordinate Fe cation.

It belongs to the ferrochelatase family.

It is found in the cytoplasm. The catalysed reaction is heme b + 2 H(+) = protoporphyrin IX + Fe(2+). The protein operates within porphyrin-containing compound metabolism; protoheme biosynthesis; protoheme from protoporphyrin-IX: step 1/1. In terms of biological role, catalyzes the ferrous insertion into protoporphyrin IX. This is Ferrochelatase from Pseudomonas fluorescens (strain ATCC BAA-477 / NRRL B-23932 / Pf-5).